The sequence spans 244 residues: 1-(5-phosphoribosyl)-5-[(5-phosphoribosylamino)methylideneamino] imidazole-4-carboxamide isomerase (244 aa).

Aspartate 8 serves as the catalytic Proton acceptor. Aspartate 130 (proton donor) is an active-site residue.

The protein belongs to the HisA/HisF family.

It is found in the cytoplasm. The catalysed reaction is 1-(5-phospho-beta-D-ribosyl)-5-[(5-phospho-beta-D-ribosylamino)methylideneamino]imidazole-4-carboxamide = 5-[(5-phospho-1-deoxy-D-ribulos-1-ylimino)methylamino]-1-(5-phospho-beta-D-ribosyl)imidazole-4-carboxamide. It functions in the pathway amino-acid biosynthesis; L-histidine biosynthesis; L-histidine from 5-phospho-alpha-D-ribose 1-diphosphate: step 4/9. The chain is 1-(5-phosphoribosyl)-5-[(5-phosphoribosylamino)methylideneamino] imidazole-4-carboxamide isomerase from Hahella chejuensis (strain KCTC 2396).